Reading from the N-terminus, the 151-residue chain is Group 10 secretory phospholipase A2 (151 aa).

The N-terminal stretch at 1-17 (MLLLLLLLLLGPGPGFS) is a signal peptide. The propeptide occupies 18–28 (EATRRSHVYKR). Cystine bridges form between cysteine 39-cysteine 97, cysteine 53-cysteine 143, cysteine 55-cysteine 71, cysteine 70-cysteine 125, cysteine 76-cysteine 150, cysteine 77-cysteine 118, cysteine 86-cysteine 111, and cysteine 104-cysteine 116. 3 residues coordinate Ca(2+): tyrosine 54, glycine 56, and glycine 58. The active site involves histidine 74. Aspartate 75 is a binding site for Ca(2+). Aspartate 119 is an active-site residue.

It belongs to the phospholipase A2 family. As to quaternary structure, interacts with PLA2R1; this interaction mediates PLA2G10 clearance and inactivation. Ca(2+) is required as a cofactor. In terms of tissue distribution, expressed at high levels in testis and the gastrointestinal tract including stomach and colon. Expressed at lower levels in other tissues including small intestine, uterus, oviduct, lung, thymus, spleen and brain. Expressed in Paneth-like secretory epithelial cells of the colon. Expressed in gastric and ileac epithelial cells and in glandular epithelium of intestinal mucosa (at protein level). Expressed in late spermatogenic cells, spermatocytes and spermatids, but not spermatogonia in seminiferous tubules (at protein level). Expressed mainly in the apical side of endometrial epithelial cells and in the interstitium beneath the epithelium of uterus (at protein level). Expressed in resident spleen macrophages (at protein level). Expressed at outermost layer of hair follicles. Expressed in dorsal root ganglia in both NEFH-positive A-fibers and PRPH-positive C-fibers (at protein level).

The protein localises to the secreted. The protein resides in the lysosome. Its subcellular location is the cytoplasmic vesicle. It localises to the secretory vesicle. It is found in the acrosome. The catalysed reaction is a 1,2-diacyl-sn-glycero-3-phosphocholine + H2O = a 1-acyl-sn-glycero-3-phosphocholine + a fatty acid + H(+). It carries out the reaction 1-hexadecanoyl-2-(9Z-octadecenoyl)-sn-glycero-3-phosphocholine + H2O = 1-hexadecanoyl-sn-glycero-3-phosphocholine + (9Z)-octadecenoate + H(+). The enzyme catalyses 1-octadecanoyl-2-(5Z,8Z,11Z,14Z-eicosatetraenoyl)-sn-glycero-3-phosphocholine + H2O = 1-octadecanoyl-sn-glycero-3-phosphocholine + (5Z,8Z,11Z,14Z)-eicosatetraenoate + H(+). It catalyses the reaction 1,2-dihexadecanoyl-sn-glycero-3-phosphocholine + H2O = 1-hexadecanoyl-sn-glycero-3-phosphocholine + hexadecanoate + H(+). The catalysed reaction is 1-hexadecanoyl-2-(9Z-octadecenoyl)-sn-glycero-3-phosphoglycerol + H2O = 1-hexadecanoyl-sn-glycero-3-phosphoglycerol + (9Z)-octadecenoate + H(+). It carries out the reaction 1,2-dihexadecanoyl-sn-glycero-3-phospho-(1'-sn-glycerol) + H2O = 1-hexadecanoyl-sn-glycero-3-phospho-(1'-sn-glycerol) + hexadecanoate + H(+). The enzyme catalyses 1-hexadecanoyl-2-(9Z-octadecenoyl)-sn-glycero-3-phospho-L-serine + H2O = 1-hexadecanoyl-sn-glycero-3-phospho-L-serine + (9Z)-octadecenoate + H(+). It catalyses the reaction 1-hexadecanoyl-2-(9Z,12Z-octadecadienoyl)-sn-glycero-3-phosphoethanolamine + H2O = 1-hexadecanoyl-sn-glycero-3-phosphoethanolamine + (9Z,12Z)-octadecadienoate + H(+). The catalysed reaction is 1-hexadecanoyl-2-(9Z-octadecenoyl)-sn-glycero-3-phosphate + H2O = 1-hexadecanoyl-sn-glycero-3-phosphate + (9Z)-octadecenoate + H(+). It carries out the reaction 1-O-hexadecyl-2-acetyl-sn-glycero-3-phosphocholine + H2O = 1-O-hexadecyl-sn-glycero-3-phosphocholine + acetate + H(+). Functionally, secretory calcium-dependent phospholipase A2 that primarily targets extracellular phospholipids. Hydrolyzes the ester bond of the fatty acyl group attached at sn-2 position of phospholipids with preference for phosphatidylcholines and phosphatidylglycerols over phosphatidylethanolamines. Preferentially releases sn-2 omega-6 and omega-3 polyunsaturated fatty acyl (PUFA) chains over saturated fatty acyls. Contributes to phospholipid remodeling of very low-density lipoprotein (VLDL), low-density lipoprotein (LDL) and high-density lipoprotein (HDL) particles. Hydrolyzes LDL phospholipids releasing unsaturated fatty acids that regulate macrophage differentiation toward foam cells. Efficiently hydrolyzes and inactivates PAF, a potent lipid mediator present in oxidized LDL. May act in an autocrine and paracrine manner. Secreted by lung epithelium, targets membrane phospholipids of infiltrating eosinophils, releasing arachidonate and boosting eicosanoid and cysteinyl leukotriene synthesis involved in airway inflammatory response. Secreted by gut epithelium, hydrolyzes dietary and biliary phosphatidylcholines in the gastrointestinal lumen, thereby regulating adipogenesis and body weight. Plays a stem cell regulator role in colon epithelium. Within intracellular compartment, mediates Paneth-like cell differentiation and its stem cell supporting functions by inhibiting Wnt signaling pathway in intestinal stem cell (ISC). Secreted in the intestinal lumen upon inflammation, acts in an autocrine way and promotes prostaglandin E2 synthesis that stimulates the Wnt signaling pathway in ISCs and tissue regeneration. May participate in hair follicle morphogenesis by regulating phosphatidylethanolamines metabolism at the outermost epithelial layer and facilitating melanin synthesis. By generating lysophosphatidylcholines (LPCs) at sperm acrosome controls sperm cell capacitation, acrosome reaction and overall fertility. May promote neurite outgrowth in neuron fibers involved in nociception. Contributes to lipid remodeling of cellular membranes and generation of lipid mediators involved in pathogen clearance. Cleaves sn-2 fatty acyl chains of phosphatidylglycerols and phosphatidylethanolamines, which are major components of membrane phospholipids in bacteria. Displays bactericidal activity against Gram-positive bacteria by directly hydrolyzing phospholipids of the bacterial membrane. In pulmonary epithelium, may contribute to host defense response against adenoviral infection. Prevents adenovirus entry into host cells by hydrolyzing host cell plasma membrane, releasing C16:0 LPCs that inhibit virus-mediated membrane fusion and viral infection. Likely prevents adenoviral entry into the endosomes of host cells. May play a role in maturation and activation of innate immune cells including macrophages, group 2 innate lymphoid cells and mast cells. The chain is Group 10 secretory phospholipase A2 (Pla2g10) from Mus musculus (Mouse).